Here is a 167-residue protein sequence, read N- to C-terminus: uncharacterized protein (167 aa).

The region spanning 1–148 (MLIRVEIPID…SAFQVHRLAD (148 aa)) is the N-acetyltransferase domain.

It belongs to the acetyltransferase family.

This is an uncharacterized protein from Escherichia coli O157:H7.